Reading from the N-terminus, the 552-residue chain is Formate--tetrahydrofolate ligase (552 aa).

65 to 72 (TPAGEGKT) contributes to the ATP binding site.

It belongs to the formate--tetrahydrofolate ligase family.

It carries out the reaction (6S)-5,6,7,8-tetrahydrofolate + formate + ATP = (6R)-10-formyltetrahydrofolate + ADP + phosphate. Its pathway is one-carbon metabolism; tetrahydrofolate interconversion. This is Formate--tetrahydrofolate ligase from Fervidobacterium nodosum (strain ATCC 35602 / DSM 5306 / Rt17-B1).